The following is an 88-amino-acid chain: Putative carnobacteriocin-BM1 immunity protein (88 aa).

Functionally, could impart immunity to carnobacteriocin-BM1 to naturally sensitive host strains. The protein is Putative carnobacteriocin-BM1 immunity protein of Carnobacterium maltaromaticum (Carnobacterium piscicola).